Consider the following 89-residue polypeptide: Small ribosomal subunit protein uS15 (89 aa).

A disordered region spans residues 1-23; the sequence is MSLDTTEKQQLINANQTHGTDTG. The segment covering 8 to 23 has biased composition (polar residues); sequence KQQLINANQTHGTDTG.

This sequence belongs to the universal ribosomal protein uS15 family. As to quaternary structure, part of the 30S ribosomal subunit. Forms a bridge to the 50S subunit in the 70S ribosome, contacting the 23S rRNA.

Its function is as follows. One of the primary rRNA binding proteins, it binds directly to 16S rRNA where it helps nucleate assembly of the platform of the 30S subunit by binding and bridging several RNA helices of the 16S rRNA. In terms of biological role, forms an intersubunit bridge (bridge B4) with the 23S rRNA of the 50S subunit in the ribosome. The sequence is that of Small ribosomal subunit protein uS15 from Prochlorococcus marinus (strain MIT 9313).